Reading from the N-terminus, the 286-residue chain is Polyamine aminopropyltransferase (286 aa).

In terms of domain architecture, PABS spans 9-242; it reads NGWIDEHHQG…GWWSWTFAAI (234 aa). Q36 is a binding site for S-methyl-5'-thioadenosine. The spermidine site is built by H67 and D91. Residues E111 and 143–144 each bind S-methyl-5'-thioadenosine; that span reads NG. Catalysis depends on D162, which acts as the Proton acceptor. P169 contributes to the S-methyl-5'-thioadenosine binding site.

Belongs to the spermidine/spermine synthase family. As to quaternary structure, homodimer or homotetramer.

It is found in the cytoplasm. The enzyme catalyses S-adenosyl 3-(methylsulfanyl)propylamine + putrescine = S-methyl-5'-thioadenosine + spermidine + H(+). The protein operates within amine and polyamine biosynthesis; spermidine biosynthesis; spermidine from putrescine: step 1/1. Its function is as follows. Catalyzes the irreversible transfer of a propylamine group from the amino donor S-adenosylmethioninamine (decarboxy-AdoMet) to putrescine (1,4-diaminobutane) to yield spermidine. In Prochlorococcus marinus (strain MIT 9313), this protein is Polyamine aminopropyltransferase.